The primary structure comprises 399 residues: Subtilisin-like protease 4 (399 aa).

A signal peptide spans 1–19; sequence MVCLKTLSVFLAAFAAADA. Positions 20-118 are excised as a propeptide; that stretch reads RAVFKTQGHK…VEQDQVVRIS (99 aa). An Inhibitor I9 domain is found at 38 to 117; it reads YIVVMKDGVS…YVEQDQVVRI (80 aa). N-linked (GlcNAc...) asparagine glycosylation is present at Asn-102. A Peptidase S8 domain is found at 128–399; sequence SWGLGRVSHR…NRLLYNGSGQ (272 aa). Catalysis depends on charge relay system residues Asp-160 and His-191. Asn-252 and Asn-308 each carry an N-linked (GlcNAc...) asparagine glycan. Ser-346 serves as the catalytic Charge relay system. N-linked (GlcNAc...) asparagine glycosylation is present at Asn-395.

Belongs to the peptidase S8 family.

The protein localises to the secreted. Secreted subtilisin-like serine protease with keratinolytic activity that contributes to pathogenicity. This is Subtilisin-like protease 4 (SUB4) from Trichophyton rubrum (Athlete's foot fungus).